The primary structure comprises 97 residues: HssA/B-like protein 38 (97 aa).

Positions 1–29 are disordered; that stretch reads MTLFSSISSISNPMTSSKSSISSFGSGTS.

The protein belongs to the hssA/B family.

This chain is HssA/B-like protein 38 (hssl38), found in Dictyostelium discoideum (Social amoeba).